We begin with the raw amino-acid sequence, 134 residues long: Putative pre-16S rRNA nuclease (134 aa).

This sequence belongs to the YqgF nuclease family.

It localises to the cytoplasm. Its function is as follows. Could be a nuclease involved in processing of the 5'-end of pre-16S rRNA. The protein is Putative pre-16S rRNA nuclease of Helicobacter pylori (strain P12).